Consider the following 400-residue polypeptide: Argininosuccinate synthase (400 aa).

ATP is bound by residues 11–19 (AYSGGLDTS) and alanine 38. Positions 89 and 94 each coordinate L-citrulline. Glycine 119 is an ATP binding site. Residues threonine 121, asparagine 125, and aspartate 126 each contribute to the L-aspartate site. Asparagine 125 serves as a coordination point for L-citrulline. Positions 129, 178, 187, 263, and 275 each coordinate L-citrulline.

Belongs to the argininosuccinate synthase family. Type 1 subfamily. In terms of assembly, homotetramer.

It localises to the cytoplasm. The catalysed reaction is L-citrulline + L-aspartate + ATP = 2-(N(omega)-L-arginino)succinate + AMP + diphosphate + H(+). It functions in the pathway amino-acid biosynthesis; L-arginine biosynthesis; L-arginine from L-ornithine and carbamoyl phosphate: step 2/3. In Desulfatibacillum aliphaticivorans, this protein is Argininosuccinate synthase.